A 218-amino-acid polypeptide reads, in one-letter code: Ribose-5-phosphate isomerase A (218 aa).

Substrate contacts are provided by residues Thr-28–Thr-31, Asp-81–Asp-84, and Lys-94–Gly-97. Glu-103 (proton acceptor) is an active-site residue. Position 121 (Lys-121) interacts with substrate.

This sequence belongs to the ribose 5-phosphate isomerase family. As to quaternary structure, homodimer.

The catalysed reaction is aldehydo-D-ribose 5-phosphate = D-ribulose 5-phosphate. Its pathway is carbohydrate degradation; pentose phosphate pathway; D-ribose 5-phosphate from D-ribulose 5-phosphate (non-oxidative stage): step 1/1. Functionally, catalyzes the reversible conversion of ribose-5-phosphate to ribulose 5-phosphate. In Pseudoalteromonas atlantica (strain T6c / ATCC BAA-1087), this protein is Ribose-5-phosphate isomerase A.